Consider the following 496-residue polypeptide: D-2-hydroxyglutarate--pyruvate transhydrogenase DLD3 (496 aa).

Lys-17 participates in a covalent cross-link: Glycyl lysine isopeptide (Lys-Gly) (interchain with G-Cter in ubiquitin). The FAD-binding PCMH-type domain occupies 64-243; the sequence is YRGQSNLILL…TGVSIVAAAK (180 aa).

The protein belongs to the FAD-binding oxidoreductase/transferase type 4 family. The cofactor is FAD.

Its subcellular location is the cytoplasm. The catalysed reaction is (R)-lactate + 2 Fe(III)-[cytochrome c] = 2 Fe(II)-[cytochrome c] + pyruvate + 2 H(+). It carries out the reaction (R)-2-hydroxyglutarate + pyruvate = (R)-lactate + 2-oxoglutarate. In terms of biological role, catalyzes the reversible oxidation of (R)-2-hydroxyglutarate to 2-oxoglutarate coupled to reduction of pyruvate to (R)-lactate. Can also use oxaloacetate as electron acceptor instead of pyruvate producing (R)-malate. The polypeptide is D-2-hydroxyglutarate--pyruvate transhydrogenase DLD3 (DLD3) (Saccharomyces cerevisiae (strain ATCC 204508 / S288c) (Baker's yeast)).